The chain runs to 348 residues: MAFSLDSILRDNIKNAKPYSSARDEYKGTEGIFLDANENPYGSAIQKMVNRYPDPLQRDVKTALSALKNVSAEHIFFGNGSDEPIDLLIRATCQPGKDSILILPPTYGMYEVSAGINDVDIISVPLTKAFDLDVDAILAAVKTHTKIIFICSPNNPTGNLMSEDKVKRILNAFSGIVVVDEAYIDFADTKGFVPLLDQYPNMVVLQTFSKAWGMAALRLGTAFASKEIVSVLNKIKPPYNINLLTQEAALEALQNVSVKDEMVYKILKQRDWLREELSKLPVCLELYPSDANFILMRTADGKKVYDYLVEHIVITRDRSKIILCEGCVRITVGTEAENKRLLDVLKTY.

Lys-210 is modified (N6-(pyridoxal phosphate)lysine).

It belongs to the class-II pyridoxal-phosphate-dependent aminotransferase family. Histidinol-phosphate aminotransferase subfamily. In terms of assembly, homodimer. Pyridoxal 5'-phosphate is required as a cofactor.

The enzyme catalyses L-histidinol phosphate + 2-oxoglutarate = 3-(imidazol-4-yl)-2-oxopropyl phosphate + L-glutamate. The protein operates within amino-acid biosynthesis; L-histidine biosynthesis; L-histidine from 5-phospho-alpha-D-ribose 1-diphosphate: step 7/9. The polypeptide is Histidinol-phosphate aminotransferase (Cytophaga hutchinsonii (strain ATCC 33406 / DSM 1761 / CIP 103989 / NBRC 15051 / NCIMB 9469 / D465)).